The following is a 224-amino-acid chain: Peptidyl-prolyl cis-trans isomerase FKBP3 (224 aa).

Alanine 2 carries the N-acetylalanine modification. Serine 36 bears the Phosphoserine mark. The tract at residues asparagine 87–glycine 119 is disordered. Residues lysine 89 to glutamate 102 are compositionally biased toward basic and acidic residues. Lysine 99 carries the post-translational modification N6-acetyllysine. The 97-residue stretch at glycine 128–aspartate 224 folds into the PPIase FKBP-type domain. Serine 152 bears the Phosphoserine mark. The residue at position 170 (lysine 170) is an N6-acetyllysine.

It belongs to the FKBP-type PPIase family.

The protein resides in the nucleus. It carries out the reaction [protein]-peptidylproline (omega=180) = [protein]-peptidylproline (omega=0). Inhibited preferentially by rapamycin over FK506. FK506- and rapamycin-binding proteins (FKBPs) constitute a family of receptors for the two immunosuppressants which inhibit T-cell proliferation by arresting two distinct cytoplasmic signal transmission pathways. PPIases accelerate the folding of proteins. In Oryctolagus cuniculus (Rabbit), this protein is Peptidyl-prolyl cis-trans isomerase FKBP3 (FKBP3).